Reading from the N-terminus, the 427-residue chain is ATP-sensitive inward rectifier potassium channel 12 (427 aa).

The Cytoplasmic portion of the chain corresponds to 1–77 (MTAASRANPY…LADMFTTCVD (77 aa)). Cys-75 carries the S-nitrosocysteine modification. A helical transmembrane segment spans residues 78–104 (IRWRYMLLIFSLAFLASWLLFGIIFWV). Residues Arg-79 and Arg-81 each coordinate a 1,2-diacyl-sn-glycero-3-phospho-(1D-myo-inositol-4,5-bisphosphate). Over 105–129 (IAVAHGDLEPAEGRGRTPCVLQVHG) the chain is Extracellular. A disulfide bond links Cys-123 and Cys-155. The helical; Pore-forming intramembrane region spans 130–146 (FMAAFLFSIETQTTIGY). The K(+) site is built by Thr-143, Ile-144, Gly-145, and Tyr-146. The Selectivity filter signature appears at 143–148 (TIGYGL). Residues 147-155 (GLRCVTEEC) lie on the Extracellular side of the membrane. Residues 156-183 (PVAVFMVVAQSIVGCIIDSFMIGAIMAK) traverse the membrane as a helical segment. Residues Lys-183 and Lys-188 each contribute to the a 1,2-diacyl-sn-glycero-3-phospho-(1D-myo-inositol-4,5-bisphosphate) site. Topologically, residues 184 to 427 (MGRPKKRAQT…ERPYRRESEI (244 aa)) are cytoplasmic. Positions 387–427 (DEEDEVATDRDGRSPQPEHDFDRLQASSGALERPYRRESEI) are disordered. Positions 393–409 (ATDRDGRSPQPEHDFDR) are enriched in basic and acidic residues. A PDZ-binding motif is present at residues 425–427 (SEI).

This sequence belongs to the inward rectifier-type potassium channel (TC 1.A.2.1) family. KCNJ12 subfamily. As to quaternary structure, homotetramer. Forms heteromer with KCNJ4. Can form heteromeric channels with Kir2.6/KCNJ18. Association, via its PDZ-recognition domain, with LIN7A, LIN7B, LIN7C, DLG1, CASK and APBA1 plays a key role in its localization and trafficking. Highest level in cerebellum. Moderately found in kidney, forebrain and skeletal muscle. Not detected in uterus, liver and pancreas.

Its subcellular location is the membrane. The protein resides in the cell membrane. It localises to the sarcolemma. It is found in the T-tubule. The catalysed reaction is K(+)(in) = K(+)(out). With respect to regulation, activated by phosphatidylinositol 4,5-biphosphate (PtdIns(4,5)P2). PtdIns(4,5)P2 binding to the cytoplasmic side of the channel triggers a conformation change leading to channel opening. Inhibited by Ba(2+). In terms of biological role, inward rectifying potassium channel that probably participates in controlling the resting membrane potential in electrically excitable cells. It probably participates in establishing action potential waveform and excitability of neuronal and muscle tissues. Inward rectifier potassium channels are characterized by a greater tendency to allow potassium to flow into the cell rather than out of it. Their voltage dependence is regulated by the concentration of extracellular potassium; as external potassium is raised, the voltage range of the channel opening shifts to more positive voltages. The inward rectification is mainly due to the blockage of outward current by internal magnesium. The polypeptide is ATP-sensitive inward rectifier potassium channel 12 (Kcnj12) (Rattus norvegicus (Rat)).